The chain runs to 884 residues: Alanine--tRNA ligase (884 aa).

Residues His-572, His-576, Cys-673, and His-677 each coordinate Zn(2+).

It belongs to the class-II aminoacyl-tRNA synthetase family. Zn(2+) serves as cofactor.

The protein resides in the cytoplasm. The enzyme catalyses tRNA(Ala) + L-alanine + ATP = L-alanyl-tRNA(Ala) + AMP + diphosphate. Catalyzes the attachment of alanine to tRNA(Ala) in a two-step reaction: alanine is first activated by ATP to form Ala-AMP and then transferred to the acceptor end of tRNA(Ala). Also edits incorrectly charged Ser-tRNA(Ala) and Gly-tRNA(Ala) via its editing domain. This Xylella fastidiosa (strain 9a5c) protein is Alanine--tRNA ligase.